The following is an 807-amino-acid chain: DNA gyrase subunit B (807 aa).

A Toprim domain is found at 429-543 (SELFIVEGDS…KGYLYIAQPP (115 aa)). Residues glutamate 435, aspartate 508, and aspartate 510 each coordinate Mg(2+).

This sequence belongs to the type II topoisomerase GyrB family. In terms of assembly, heterotetramer, composed of two GyrA and two GyrB chains. In the heterotetramer, GyrA contains the active site tyrosine that forms a transient covalent intermediate with DNA, while GyrB binds cofactors and catalyzes ATP hydrolysis. Mg(2+) is required as a cofactor. Mn(2+) serves as cofactor. It depends on Ca(2+) as a cofactor.

The protein localises to the cytoplasm. The enzyme catalyses ATP-dependent breakage, passage and rejoining of double-stranded DNA.. A type II topoisomerase that negatively supercoils closed circular double-stranded (ds) DNA in an ATP-dependent manner to modulate DNA topology and maintain chromosomes in an underwound state. Negative supercoiling favors strand separation, and DNA replication, transcription, recombination and repair, all of which involve strand separation. Also able to catalyze the interconversion of other topological isomers of dsDNA rings, including catenanes and knotted rings. Type II topoisomerases break and join 2 DNA strands simultaneously in an ATP-dependent manner. In Rickettsia typhi (strain ATCC VR-144 / Wilmington), this protein is DNA gyrase subunit B.